The primary structure comprises 376 residues: Serpin B6 (376 aa).

Position 1 is an N-acetylmethionine (methionine 1). Position 151 is a phosphoserine (serine 151). Position 195 is an N6-acetyllysine (lysine 195).

Belongs to the serpin family. Ov-serpin subfamily. In terms of assembly, forms a complex with the monomeric form of beta-tryptase.

The protein localises to the cytoplasm. Inhibitor of cathepsin G, kallikrein-8 and thrombin. May play an important role in the inner ear in the protection against leakage of lysosomal content during stress. May be involved in the regulation of serine proteinases present in the brain or extravasated from the blood. This is Serpin B6 (SERPINB6) from Macaca fascicularis (Crab-eating macaque).